We begin with the raw amino-acid sequence, 697 residues long: Polyribonucleotide nucleotidyltransferase (697 aa).

Asp-488 and Asp-494 together coordinate Mg(2+). One can recognise a KH domain in the interval 555-614; that stretch reads PTFEVITINPDKIRDVIGKGGATIRQITEETKAAIDIEDNGTVRVFGETKAAARAAIAKI. The 69-residue stretch at 624-692 folds into the S1 motif domain; sequence GKIYDGKVIR…NRGRIKLSMK (69 aa).

The protein belongs to the polyribonucleotide nucleotidyltransferase family. As to quaternary structure, component of the RNA degradosome, which is a multiprotein complex involved in RNA processing and mRNA degradation. Requires Mg(2+) as cofactor.

The protein localises to the cytoplasm. It carries out the reaction RNA(n+1) + phosphate = RNA(n) + a ribonucleoside 5'-diphosphate. Involved in mRNA degradation. Catalyzes the phosphorolysis of single-stranded polyribonucleotides processively in the 3'- to 5'-direction. The polypeptide is Polyribonucleotide nucleotidyltransferase (Acinetobacter baylyi (strain ATCC 33305 / BD413 / ADP1)).